Consider the following 440-residue polypeptide: 23S rRNA (uracil(1939)-C(5))-methyltransferase RlmD (440 aa).

Residues 8–69 (PQKINKLQRE…RQFGLATTKK (62 aa)) form the TRAM domain. Residues C82, C88, C91, and C169 each coordinate [4Fe-4S] cluster. S-adenosyl-L-methionine contacts are provided by Q272, F301, N306, E322, D349, and D370. The active-site Nucleophile is C396.

Belongs to the class I-like SAM-binding methyltransferase superfamily. RNA M5U methyltransferase family. RlmD subfamily.

The enzyme catalyses uridine(1939) in 23S rRNA + S-adenosyl-L-methionine = 5-methyluridine(1939) in 23S rRNA + S-adenosyl-L-homocysteine + H(+). Catalyzes the formation of 5-methyl-uridine at position 1939 (m5U1939) in 23S rRNA. This Mannheimia succiniciproducens (strain KCTC 0769BP / MBEL55E) protein is 23S rRNA (uracil(1939)-C(5))-methyltransferase RlmD.